The chain runs to 505 residues: Lysine--tRNA ligase (505 aa).

Mg(2+) is bound by residues Glu-415 and Glu-422.

It belongs to the class-II aminoacyl-tRNA synthetase family. Homodimer. Mg(2+) serves as cofactor.

It localises to the cytoplasm. It catalyses the reaction tRNA(Lys) + L-lysine + ATP = L-lysyl-tRNA(Lys) + AMP + diphosphate. The protein is Lysine--tRNA ligase of Salmonella typhi.